The following is a 443-amino-acid chain: Carboxypeptidase M (443 aa).

The signal sequence occupies residues 1-17 (MDRARLWLGLLLPVVAA). One can recognise a Peptidase M14 domain in the interval 21–311 (RYHHQEGMEA…ASLIEYIKQV (291 aa)). The N-linked (GlcNAc...) asparagine glycan is linked to Asn38. Residues His83 and Glu86 each contribute to the Zn(2+) site. 3 disulfides stabilise this stretch: Cys138–Cys285, Cys242–Cys284, and Cys341–Cys410. Asn164 carries an N-linked (GlcNAc...) asparagine glycan. His190 provides a ligand contact to Zn(2+). The active-site Proton donor/acceptor is Glu281. A glycan (N-linked (GlcNAc...) asparagine) is linked at Asn363. Ser423 carries the GPI-anchor amidated serine lipid modification. A propeptide spans 424-443 (AATKPSLGVFFMTLLYVFFK) (removed in mature form).

Belongs to the peptidase M14 family. Requires Zn(2+) as cofactor.

The protein resides in the cell membrane. The enzyme catalyses Cleavage of C-terminal arginine or lysine residues from polypeptides.. Its function is as follows. Specifically removes C-terminal basic residues (Arg or Lys) from peptides and proteins. It is believed to play important roles in the control of peptide hormone and growth factor activity at the cell surface, and in the membrane-localized degradation of extracellular proteins. This chain is Carboxypeptidase M (Cpm), found in Mus musculus (Mouse).